We begin with the raw amino-acid sequence, 87 residues long: Omega-lycotoxin-Am1c (87 aa).

A signal peptide spans 1–17; that stretch reads MKLSIFFVLFFIAIAYC. Positions 18–40 are excised as a propeptide; that stretch reads QPEFLDDEEDEVEETLPVAEEGR. 4 disulfide bridges follow: Cys-44-Cys-59, Cys-51-Cys-64, Cys-58-Cys-84, and Cys-66-Cys-82.

It belongs to the neurotoxin omega-lctx family. In terms of tissue distribution, expressed by the venom gland.

It localises to the secreted. Functionally, modulates Cav2.1/CACNA1A voltage-gated calcium channels (P/Q-type currents) in rat cerebellar Purkinje cells and hippocampal CA1-CA3 neurons. At saturating concentrations (&gt;10 nM) decelerates activation kinetics and slightly increases peak amplitude without affecting deactivation kinetics. In vivo, does not cause death when intravenously injected into mice. In rat models, through its activity on Cav2.1/CACNA1A, has an ameliorative effect on memory defects provoked by hyperstimulation of N-methyl-D-aspartate receptors (NMDARs) in the hippocampus. This is Omega-lycotoxin-Am1c from Alopecosa marikovskyi (Wolf spider).